Reading from the N-terminus, the 520-residue chain is MTQTAHPDSVLIVDFGSQVTQLIARRVREAGVYCEIVPFQSAEEGFHRLQPKAVILSGSPASTVDEGSPRAPDIIFDSGLPVFGICYGQQTMCMQLGGKVESGHHREFGRAFLEVDRDCQLFEGLWSSGSRHQVWMSHGDRVTALPDGFEVVATSSNAPYAFIADEKRKYYGVQFHPEVVHTPDGAKLIGNFIHNIAGIKGDWSMSAYRQKAVEQIRAQVGDKRVICALSGGVDSSVAALLIHEAVGDQLTCILVDHGLMRKDEAAGVVAMFREHYNLHLLHVDAADRFIGELEGVSDPETKRKIIGRLFIETFEEEARKLGGADFLGQGTLYPDVIESVSFTGGPSVTIKSHHNVGGLPERMKMQLVEPLRELFKDEVRALGRELGLPDSFIGRHPFPGPGLAIRCPGGITREKLEILREADAIYLDEIRKAGLYDAIWQAFAVLLPVQTVGVMGDGRTYEFVCALRAVTSVDGMTADFYHYDMEFLGRAATRIINEVRGINRVVYDVTSKPPGTIEWE.

One can recognise a Glutamine amidotransferase type-1 domain in the interval 9–202 (SVLIVDFGSQ…IHNIAGIKGD (194 aa)). The Nucleophile role is filled by C86. Active-site residues include H176 and E178. Residues 203–395 (WSMSAYRQKA…LGLPDSFIGR (193 aa)) form the GMPS ATP-PPase domain. 230-236 (SGGVDSS) provides a ligand contact to ATP.

Homodimer.

The enzyme catalyses XMP + L-glutamine + ATP + H2O = GMP + L-glutamate + AMP + diphosphate + 2 H(+). The protein operates within purine metabolism; GMP biosynthesis; GMP from XMP (L-Gln route): step 1/1. Its function is as follows. Catalyzes the synthesis of GMP from XMP. The protein is GMP synthase [glutamine-hydrolyzing] of Rhizobium johnstonii (strain DSM 114642 / LMG 32736 / 3841) (Rhizobium leguminosarum bv. viciae).